We begin with the raw amino-acid sequence, 419 residues long: Squalene synthase R6 (419 aa).

The chain crosses the membrane as a helical span at residues 397 to 417 (TMYLVVLLLGILGVAAAVLMA).

This sequence belongs to the phytoene/squalene synthase family. It depends on Mg(2+) as a cofactor.

Its subcellular location is the membrane. It carries out the reaction 2 (2E,6E)-farnesyl diphosphate + NADPH + H(+) = squalene + 2 diphosphate + NADP(+). The catalysed reaction is 2 (2E,6E)-farnesyl diphosphate + NADH + H(+) = squalene + 2 diphosphate + NAD(+). Its pathway is terpene metabolism; lanosterol biosynthesis; lanosterol from farnesyl diphosphate: step 1/3. Functionally, squalene synthase; part of the gene cluster that mediates the biosynthesis of squalestatin S1 (SQS1, also known as zaragozic acid A), a heavily oxidized fungal polyketide that offers potent cholesterol lowering activity by targeting squalene synthase (SS). Catalyzes the condensation of 2 two farnesyl pyrophosphate moieties to form squalene. The presence of a gene encoding a squalene synthase supports the identification of the cluster as being responsible for SQS1 production and suggests a likely mechanism for self-resistance. This is Squalene synthase R6 from Phoma sp. (strain ATCC 20986 / MF5453).